A 108-amino-acid chain; its full sequence is Pyrimidine/purine nucleoside phosphorylase (108 aa).

This sequence belongs to the nucleoside phosphorylase PpnP family.

It carries out the reaction a purine D-ribonucleoside + phosphate = a purine nucleobase + alpha-D-ribose 1-phosphate. It catalyses the reaction adenosine + phosphate = alpha-D-ribose 1-phosphate + adenine. The catalysed reaction is cytidine + phosphate = cytosine + alpha-D-ribose 1-phosphate. The enzyme catalyses guanosine + phosphate = alpha-D-ribose 1-phosphate + guanine. It carries out the reaction inosine + phosphate = alpha-D-ribose 1-phosphate + hypoxanthine. It catalyses the reaction thymidine + phosphate = 2-deoxy-alpha-D-ribose 1-phosphate + thymine. The catalysed reaction is uridine + phosphate = alpha-D-ribose 1-phosphate + uracil. The enzyme catalyses xanthosine + phosphate = alpha-D-ribose 1-phosphate + xanthine. In terms of biological role, catalyzes the phosphorolysis of diverse nucleosides, yielding D-ribose 1-phosphate and the respective free bases. Can use uridine, adenosine, guanosine, cytidine, thymidine, inosine and xanthosine as substrates. Also catalyzes the reverse reactions. In Acinetobacter baylyi (strain ATCC 33305 / BD413 / ADP1), this protein is Pyrimidine/purine nucleoside phosphorylase.